A 207-amino-acid polypeptide reads, in one-letter code: Flavin-dependent thymidylate synthase (207 aa).

One can recognise a ThyX domain in the interval 1 to 204 (MQITLLFHTP…KFIFEHCLHK (204 aa)). Residues Ser-50 and 74–76 (RHR) contribute to the FAD site. Residues 71 to 74 (EVAR), 84 to 86 (STR), and Lys-143 each bind dUMP. The short motif at 74–84 (RHRHTSPSVKS) is the ThyX motif element. Residues 159–161 (NAR) and Asn-165 each bind FAD. Arg-170 serves as a coordination point for dUMP. Arg-170 serves as the catalytic Involved in ionization of N3 of dUMP, leading to its activation.

Belongs to the thymidylate synthase ThyX family. Homotetramer. FAD serves as cofactor.

It carries out the reaction dUMP + (6R)-5,10-methylene-5,6,7,8-tetrahydrofolate + NADPH + H(+) = dTMP + (6S)-5,6,7,8-tetrahydrofolate + NADP(+). Its pathway is pyrimidine metabolism; dTTP biosynthesis. Functionally, catalyzes the reductive methylation of 2'-deoxyuridine-5'-monophosphate (dUMP) to 2'-deoxythymidine-5'-monophosphate (dTMP) while utilizing 5,10-methylenetetrahydrofolate (mTHF) as the methyl donor, and NADPH and FADH(2) as the reductant. This Campylobacter jejuni subsp. jejuni serotype O:2 (strain ATCC 700819 / NCTC 11168) protein is Flavin-dependent thymidylate synthase.